The sequence spans 267 residues: Protein BMH1 (267 aa).

S2 carries the post-translational modification N-acetylserine. K76 participates in a covalent cross-link: Glycyl lysine isopeptide (Lys-Gly) (interchain with G-Cter in ubiquitin). S89 is subject to Phosphoserine. The segment at 236-267 (DMSESGQAEDQQQQQQHQQQQPPAAAEGEAPK) is disordered. Low complexity predominate over residues 243–267 (AEDQQQQQQHQQQQPPAAAEGEAPK).

This sequence belongs to the 14-3-3 family. In terms of assembly, homodimer. Interacts with NTH1 (via N-terminus when phosphorylated by PKA); the interaction is direct and activates NTH1. Interacts with FIN1.

Functionally, involved in growth regulation. The protein is Protein BMH1 (BMH1) of Saccharomyces cerevisiae (strain ATCC 204508 / S288c) (Baker's yeast).